Reading from the N-terminus, the 333-residue chain is BRISC and BRCA1-A complex member 1 (333 aa).

M1 is subject to N-acetylmethionine. Residues 1–85 (MEVAEANSPT…PWQVPASASE (85 aa)) are disordered. A Phosphoserine modification is found at S8. The segment covering 10–24 (TEEEEEEEEEGEETI) has biased composition (acidic residues). Residues S33 and S53 each carry the phosphoserine modification. The span at 58–67 (EAATADGGAA) shows a compositional bias: low complexity. The interval 99-302 (VIICLDLSEE…LELHNCMAKL (204 aa)) is VWFA-like.

This sequence belongs to the BABAM1 family. Component of the ARISC complex, at least composed of UIMC1/RAP80, ABRAXAS1, BRCC3/BRCC36, BABAM2 and BABAM1/NBA1. Component of the BRCA1-A complex, at least composed of BRCA1, BARD1, UIMC1/RAP80, ABRAXAS1, BRCC3/BRCC36, BABAM2 and BABAM1/NBA1. In the BRCA1-A complex, interacts directly with ABRAXAS1 and BABAM2. Component of the BRISC complex, at least composed of ABRAXAS2, BRCC3/BRCC36, BABAM2 and BABAM1/NBA1. Identified in a complex with SHMT2 and the other subunits of the BRISC complex.

The protein resides in the cytoplasm. The protein localises to the nucleus. Its function is as follows. Component of the BRCA1-A complex, a complex that specifically recognizes 'Lys-63'-linked ubiquitinated histones H2A and H2AX at DNA lesions sites, leading to target the BRCA1-BARD1 heterodimer to sites of DNA damage at double-strand breaks (DSBs). The BRCA1-A complex also possesses deubiquitinase activity that specifically removes 'Lys-63'-linked ubiquitin on histones H2A and H2AX. In the BRCA1-A complex, it is required for the complex integrity and its localization at DSBs. Component of the BRISC complex, a multiprotein complex that specifically cleaves 'Lys-63'-linked ubiquitin in various substrates. In these 2 complexes, it is probably required to maintain the stability of BABAM2 and help the 'Lys-63'-linked deubiquitinase activity mediated by BRCC3/BRCC36 component. The BRISC complex is required for normal mitotic spindle assembly and microtubule attachment to kinetochores via its role in deubiquitinating NUMA1. Plays a role in interferon signaling via its role in the deubiquitination of the interferon receptor IFNAR1; deubiquitination increases IFNAR1 activity by enhancing its stability and cell surface expression. Down-regulates the response to bacterial lipopolysaccharide (LPS) via its role in IFNAR1 deubiquitination. The polypeptide is BRISC and BRCA1-A complex member 1 (Babam1) (Mus musculus (Mouse)).